The chain runs to 433 residues: MSSEDRHLGSSCGSFIKTEPSSPSSGIDALSHHSPSGSSDASGGFGIALSTHANGLDSPPMFAGAGLGGNPCRKSYEDCTSGIMEDSAIKCEYMLNAIPKRLCLVCGDIASGYHYGVASCEACKAFFKRTIQGNIEYNCPATNECEITKRRRKSCQACRFMKCLKVGMLKEGVRLDRVRGGRQKYKRRLDSENSPYLNLPISPPAKKPLTKIVSNLLGVEQDKLYAMPPNDIPEGDIKALTTLCELADRELVFLINWAKHIPGFPSLTLGDQMSLLQSAWMEILILGIVYRSLPYDDKLAYAEDYIMDEEHSRLVGLLDLYRAILQLVRRYKKLKVEKEEFMILKALALANSDSMYIENLEAVQKLQDLLHEALQDYELSQRHEEPRRAGKLLLTLPLLRQTAAKAVQHFYSVKLQGKVPMHKLFLEMLEAKV.

Positions 1-38 are disordered; sequence MSSEDRHLGSSCGSFIKTEPSSPSSGIDALSHHSPSGS. An interaction with NANOG region spans residues 93–211; sequence YMLNAIPKRL…SPPAKKPLTK (119 aa). Positions 100–186 form a DNA-binding region, nuclear receptor; the sequence is KRLCLVCGDI…RVRGGRQKYK (87 aa). 2 NR C4-type zinc fingers span residues 103 to 123 and 139 to 163; these read CLVC…CEAC and CPAT…FMKC. Positions 203-433 are essential for ESRRB transcriptional activity and interaction with NCOA3; it reads PPAKKPLTKI…LFLEMLEAKV (231 aa). Residues 208–432 enclose the NR LBD domain; the sequence is PLTKIVSNLL…KLFLEMLEAK (225 aa).

The protein belongs to the nuclear hormone receptor family. NR3 subfamily. In terms of assembly, binds DNA as a monomer. Interacts with NR0B1; represses ESRRB activity at the GATA6 promoter. Interacts with NANOG; reciprocally modulates their transcriptional activities and activates POU5F1 expression. Interacts with NCOA3; mediates the interaction between ESRRB and RNA polymerase II complexes and allows NCOA3 corecruitment to ESRRB, KLF4, NANOG, and SOX2 enhancer regions to trigger ESRRB-dependent gene activation involved in self-renewal and pluripotency. Interacts with KDM1A; co-occupes the core set of ESRRB targets including ELF5 and EOMES. Interacts with the multiprotein complex Integrator, at least composed of INTS1, INTS2, INTS3, INTS4, INTS5, INTS6, INTS7, INTS8, INTS9/RC74, INTS10, INTS11/CPSF3L and INTS12; ESRRB is probably not a core component of the integrator complex and associates to integrator via its interaction with INTS1 and INTS9; attracts the transcriptional machinery. Interacts with JARID2. Interacts with POU5F1; recruits ESRRB near the POU5F1-SOX2 element in the NANOG proximal promoter leading to activation of NANOG expression; the interaction is DNA independent. Acetylated by PCAF/KAT2 (in vitro). Highly expressed in undifferentiated ESCs. Expressed in immature horizontal cells and in rod photoreceptors at intermediate and late stages of differentiation. Expressed in endolymph-producing epithelial cells.

Its subcellular location is the nucleus. The protein resides in the cytoplasm. It localises to the chromosome. Transcription factor that binds a canonical ESRRB recognition (ERRE) sequence 5'TCAAGGTCA-3' localized on promoter and enhancer of targets genes regulating their expression or their transcriptional activity. Plays a role, in a LIF-independent manner, in maintainance of self-renewal and pluripotency of embryonic and trophoblast stem cells through different signaling pathways including FGF signaling pathway and Wnt signaling pathways. Involved in morula development (2-16 cells embryos) by acting as a regulator at the 8-cell stage. Upon FGF signaling pathway activation, interacts with KDM1A by directly binding to enhancer site of ELF5 and EOMES and activating their transcription leading to self-renewal of trophoblast stem cells. Also regulates expression of multiple rod-specific genes and is required for survival of this cell type. Plays a role as transcription factor activator of GATA6, NR0B1, POU5F1 and PERM1. Plays a role as transcription factor repressor of NFE2L2 transcriptional activity and ESR1 transcriptional activity. During mitosis remains bound to a subset of interphase target genes, including pluripotency regulators, through the canonical ESRRB recognition (ERRE) sequence, leading to their transcriptional activation in early G1 phase. Can coassemble on structured DNA elements with other transcription factors like SOX2, POU5F1, KDM1A and NCOA3 to trigger ESRRB-dependent gene activation. This mechanism, in the case of SOX2 corecruitment prevents the embryonic stem cells (ESCs) to epiblast stem cells (EpiSC) transition through positive regulation of NR0B1 that inhibits the EpiSC transcriptional program. Also plays a role inner ear development by controlling expression of ion channels and transporters and in early placentation. The polypeptide is Steroid hormone receptor ERR2 (Mus musculus (Mouse)).